Here is a 517-residue protein sequence, read N- to C-terminus: uncharacterized protein (517 aa).

10 consecutive transmembrane segments (helical) span residues 35 to 55 (FSLIVLSFIVSFFLIVAIPGI), 81 to 101 (IAIYTLAALAFSFCMSVGVFN), 102 to 122 (IGISGQMMAGANFGFMMILKV), 135 to 155 (IITILLMILGSVTVAMVVAAL), 164 to 184 (VVSAIMLNWVIVLVSAYLVGT), 223 to 243 (LVIAIAAAIFIAVLMKFTVFG), 268 to 288 (FLSFVISGILSGLLAAVVYTA), 302 to 322 (FGITSVPITGFDGIAIGLIAL), 328 to 348 (IVIVSTIISFVTIGAKPAGLN), and 352 to 372 (ASLVLGIMMYFAAIYNLMIYI).

The protein resides in the cell membrane. This is an uncharacterized protein from Mycoplasma pneumoniae (strain ATCC 29342 / M129 / Subtype 1) (Mycoplasmoides pneumoniae).